A 486-amino-acid polypeptide reads, in one-letter code: Photosystem II CP43 reaction center protein (486 aa).

Positions 1 to 28 (MKVFVHGWQHKISHTRILYSLRRFYHVE) are excised as a propeptide. The next 5 helical transmembrane spans lie at 82 to 106 (LFEV…PHLA), 147 to 168 (LIGP…RDKN), 191 to 213 (KALF…RLIN), 268 to 288 (KPFA…LSYS), and 304 to 325 (WYNN…ASQA). E380 serves as a coordination point for [CaMn4O5] cluster. A helical membrane pass occupies residues 460–484 (RARAAAAGFEKGINRENEAVLSMRP).

Belongs to the PsbB/PsbC family. PsbC subfamily. PSII is composed of 1 copy each of membrane proteins PsbA, PsbB, PsbC, PsbD, PsbE, PsbF, PsbH, PsbI, PsbJ, PsbK, PsbL, PsbM, PsbT, PsbX, PsbY, PsbZ, Psb30/Ycf12, at least 3 peripheral proteins of the oxygen-evolving complex and a large number of cofactors. It forms dimeric complexes. It depends on Binds multiple chlorophylls and provides some of the ligands for the Ca-4Mn-5O cluster of the oxygen-evolving complex. It may also provide a ligand for a Cl- that is required for oxygen evolution. PSII binds additional chlorophylls, carotenoids and specific lipids. as a cofactor.

The protein localises to the plastid. It is found in the chloroplast thylakoid membrane. One of the components of the core complex of photosystem II (PSII). It binds chlorophyll and helps catalyze the primary light-induced photochemical processes of PSII. PSII is a light-driven water:plastoquinone oxidoreductase, using light energy to abstract electrons from H(2)O, generating O(2) and a proton gradient subsequently used for ATP formation. The chain is Photosystem II CP43 reaction center protein from Gracilaria tenuistipitata var. liui (Red alga).